Reading from the N-terminus, the 363-residue chain is Ribosomal RNA large subunit methyltransferase M (363 aa).

Residues Ser-190, 223–226 (CPGG), Asp-242, Asp-262, and Asp-279 contribute to the S-adenosyl-L-methionine site. Lys-308 (proton acceptor) is an active-site residue.

This sequence belongs to the class I-like SAM-binding methyltransferase superfamily. RNA methyltransferase RlmE family. RlmM subfamily. As to quaternary structure, monomer.

The protein localises to the cytoplasm. It catalyses the reaction cytidine(2498) in 23S rRNA + S-adenosyl-L-methionine = 2'-O-methylcytidine(2498) in 23S rRNA + S-adenosyl-L-homocysteine + H(+). Functionally, catalyzes the 2'-O-methylation at nucleotide C2498 in 23S rRNA. This is Ribosomal RNA large subunit methyltransferase M from Aliivibrio salmonicida (strain LFI1238) (Vibrio salmonicida (strain LFI1238)).